Consider the following 159-residue polypeptide: Phosphopantetheine adenylyltransferase (159 aa).

Residue Thr-10 participates in substrate binding. ATP-binding positions include 10 to 11 and His-18; that span reads TF. Lys-42, Met-74, and Arg-88 together coordinate substrate. ATP contacts are provided by residues 89–91, Glu-99, and 124–130; these read GLR and WSFISSS.

It belongs to the bacterial CoaD family. In terms of assembly, homohexamer. Mg(2+) is required as a cofactor.

It is found in the cytoplasm. The enzyme catalyses (R)-4'-phosphopantetheine + ATP + H(+) = 3'-dephospho-CoA + diphosphate. It functions in the pathway cofactor biosynthesis; coenzyme A biosynthesis; CoA from (R)-pantothenate: step 4/5. Reversibly transfers an adenylyl group from ATP to 4'-phosphopantetheine, yielding dephospho-CoA (dPCoA) and pyrophosphate. The chain is Phosphopantetheine adenylyltransferase from Klebsiella pneumoniae subsp. pneumoniae (strain ATCC 700721 / MGH 78578).